Here is a 311-residue protein sequence, read N- to C-terminus: Solute carrier family 25 member 48 (311 aa).

Solcar repeat units lie at residues Ser-3–Phe-86, Arg-101–Trp-205, and Pro-214–Ala-301. Transmembrane regions (helical) follow at residues Phe-9–Val-29, Gly-61–Ser-81, Leu-107–Ile-127, Val-189–Glu-209, Cys-217–Met-237, and Ile-277–Tyr-295.

The protein belongs to the mitochondrial carrier (TC 2.A.29) family.

The protein localises to the mitochondrion inner membrane. This Homo sapiens (Human) protein is Solute carrier family 25 member 48 (SLC25A48).